Here is a 419-residue protein sequence, read N- to C-terminus: Caspase-12 (419 aa).

Residues 1-92 enclose the CARD domain; sequence MAARRTHERD…QLSLQFSNDE (92 aa). The residue at position 85 (S85) is a Phosphoserine. Positions 88 to 113 are disordered; it reads FSNDEDDGPQKICTPSSPSESKRKVE. Active-site residues include H250 and C298.

Belongs to the peptidase C14A family. In terms of assembly, heterotetramer that consists of two anti-parallel arranged heterodimers, each one formed by two subunits (Potential). Interacts with TRAF2 under resting conditions; this interaction is reduced in ER stress conditions. In terms of tissue distribution, mainly expressed in skeletal muscle and lung.

Involved in the activation cascade of caspases responsible for apoptosis execution. In Mus musculus (Mouse), this protein is Caspase-12 (Casp12).